The primary structure comprises 266 residues: Diphthine synthase (266 aa).

Residues leucine 9, aspartate 84, valine 87, 112–113 (SI), leucine 169, alanine 210, and histidine 235 contribute to the S-adenosyl-L-methionine site.

It belongs to the diphthine synthase family. In terms of assembly, homodimer.

The catalysed reaction is 2-[(3S)-amino-3-carboxypropyl]-L-histidyl-[translation elongation factor 2] + 3 S-adenosyl-L-methionine = diphthine-[translation elongation factor 2] + 3 S-adenosyl-L-homocysteine + 3 H(+). It participates in protein modification; peptidyl-diphthamide biosynthesis. Functionally, S-adenosyl-L-methionine-dependent methyltransferase that catalyzes the trimethylation of the amino group of the modified target histidine residue in translation elongation factor 2 (EF-2), to form an intermediate called diphthine. The three successive methylation reactions represent the second step of diphthamide biosynthesis. This chain is Diphthine synthase, found in Methanosarcina acetivorans (strain ATCC 35395 / DSM 2834 / JCM 12185 / C2A).